A 380-amino-acid polypeptide reads, in one-letter code: PqqA peptide cyclase (380 aa).

In terms of domain architecture, Radical SAM core spans 12–228 (FGIPLAVLLE…EEARERLKGR (217 aa)). Positions 26, 30, and 33 each coordinate [4Fe-4S] cluster.

The protein belongs to the radical SAM superfamily. PqqE family. As to quaternary structure, interacts with PqqD. The interaction is necessary for activity of PqqE. It depends on [4Fe-4S] cluster as a cofactor.

It catalyses the reaction [PQQ precursor protein] + S-adenosyl-L-methionine = E-Y cross-linked-[PQQ precursor protein] + 5'-deoxyadenosine + L-methionine + H(+). It functions in the pathway cofactor biosynthesis; pyrroloquinoline quinone biosynthesis. Catalyzes the cross-linking of a glutamate residue and a tyrosine residue in the PqqA protein as part of the biosynthesis of pyrroloquinoline quinone (PQQ). The protein is PqqA peptide cyclase of Bradyrhizobium diazoefficiens (strain JCM 10833 / BCRC 13528 / IAM 13628 / NBRC 14792 / USDA 110).